The chain runs to 356 residues: Cell division protein ZipA (356 aa).

The Periplasmic segment spans residues 1-6; that stretch reads MEDLQL. Residues 7-27 form a helical membrane-spanning segment; sequence VLFVLGAIAIVAVLVHGFWSI. Over 28-356 the chain is Cytoplasmic; it reads RRQQPKSLKD…DYLHRIRANA (329 aa). The interval 132 to 155 is disordered; that stretch reads PAQPDFSLQPPVAKEQHRGPKVSR.

This sequence belongs to the ZipA family. Interacts with FtsZ via their C-terminal domains.

It localises to the cell inner membrane. In terms of biological role, essential cell division protein that stabilizes the FtsZ protofilaments by cross-linking them and that serves as a cytoplasmic membrane anchor for the Z ring. Also required for the recruitment to the septal ring of downstream cell division proteins. This Shewanella baltica (strain OS185) protein is Cell division protein ZipA.